Consider the following 435-residue polypeptide: uncharacterized protein (435 aa).

9 consecutive transmembrane segments (helical) span residues L40–F60, V103–L123, I133–P153, L195–L215, I226–G246, V313–V333, L358–W378, W381–P401, and V414–G434.

It is found in the cell membrane. This is an uncharacterized protein from Mycobacterium bovis (strain ATCC BAA-935 / AF2122/97).